Consider the following 303-residue polypeptide: Ribosomal RNA small subunit methyltransferase H (303 aa).

S-adenosyl-L-methionine contacts are provided by residues 33–35 (GGH), Asp-52, Phe-78, Asp-99, and Gln-106.

Belongs to the methyltransferase superfamily. RsmH family.

Its subcellular location is the cytoplasm. It carries out the reaction cytidine(1402) in 16S rRNA + S-adenosyl-L-methionine = N(4)-methylcytidine(1402) in 16S rRNA + S-adenosyl-L-homocysteine + H(+). Its function is as follows. Specifically methylates the N4 position of cytidine in position 1402 (C1402) of 16S rRNA. The polypeptide is Ribosomal RNA small subunit methyltransferase H (Phytoplasma australiense).